The primary structure comprises 110 residues: Acylphosphatase (110 aa).

One can recognise an Acylphosphatase-like domain in the interval 24–110 (RVRVYVSGRV…SGGARGFEVR (87 aa)). Residues Arg-39 and Asn-57 contribute to the active site.

The protein belongs to the acylphosphatase family.

The catalysed reaction is an acyl phosphate + H2O = a carboxylate + phosphate + H(+). This is Acylphosphatase (acyP) from Rubrobacter xylanophilus (strain DSM 9941 / JCM 11954 / NBRC 16129 / PRD-1).